The primary structure comprises 291 residues: MAVTLSLLLSGRVCAAVARCGFATRGVADPGPIGREPDPDSDWEPEERELQEVKSTLKRQKKAIRFQKIRRQMEASGAPPRTLTWEAMEQIRYLHEEFPESWSVPRLAEGFDVSTDVIRRVLKSKFLPTLEQKLKQDQKVLKKAGLAPLLQQLRGSGNTSKLLPAGHSVSGSLLMPGHEASSKDPNHSTALKVIESDTHRTNTPRRWKGRNKEIQDLEESFVPVAAPLGHPRELQKYSSDSESPRRTGNGALPSDQKLEELKAEEPGNFSSKVVQRGREFFDSNGNFLYRI.

The signal sequence occupies residues Met-1–Ala-15. Residues Val-27 to Glu-49 form a disordered region. Positions Pro-39–Glu-49 are enriched in acidic residues. Ser-41 carries the post-translational modification Phosphoserine. Residue Asn-158 is glycosylated (N-linked (GlcNAc...) asparagine). Positions Val-224–Ser-270 are disordered. Residues Gln-256–Glu-265 are compositionally biased toward basic and acidic residues.

Belongs to the neugrin family. Forms a regulatory protein-RNA complex, consisting of RCC1L, NGRN, RPUSD3, RPUSD4, TRUB2, FASTKD2 and 16S mt-rRNA. Interacts with 16S mt-rRNA; this interaction is direct.

It is found in the nucleus. Its subcellular location is the secreted. The protein resides in the mitochondrion membrane. Its function is as follows. Plays an essential role in mitochondrial ribosome biogenesis. As a component of a functional protein-RNA module, consisting of RCC1L, NGRN, RPUSD3, RPUSD4, TRUB2, FASTKD2 and 16S mitochondrial ribosomal RNA (16S mt-rRNA), controls 16S mt-rRNA abundance and is required for intra-mitochondrial translation of core subunits of the oxidative phosphorylation system. The protein is Neugrin (NGRN) of Pongo abelii (Sumatran orangutan).